The chain runs to 337 residues: Heme A synthase (337 aa).

The next 5 helical transmembrane spans lie at 6–26 (ITKW…IGGI), 87–107 (FIHR…LIYF), 119–139 (LPYI…WYMV), 154–174 (LAFH…QLIK), and 192–212 (LIFS…GALV). Position 256 (His-256) interacts with heme. Transmembrane regions (helical) follow at residues 258–278 (LVGY…LKIE), 285–305 (IAYF…ITLL), and 308–328 (VPII…SIII). His-316 contributes to the heme binding site.

It belongs to the COX15/CtaA family. Type 2 subfamily. As to quaternary structure, interacts with CtaB. Heme b serves as cofactor.

The protein resides in the cell membrane. The enzyme catalyses Fe(II)-heme o + 2 A + H2O = Fe(II)-heme a + 2 AH2. Its pathway is porphyrin-containing compound metabolism; heme A biosynthesis; heme A from heme O: step 1/1. Catalyzes the conversion of heme O to heme A by two successive hydroxylations of the methyl group at C8. The first hydroxylation forms heme I, the second hydroxylation results in an unstable dihydroxymethyl group, which spontaneously dehydrates, resulting in the formyl group of heme A. The polypeptide is Heme A synthase (Rickettsia africae (strain ESF-5)).